An 84-amino-acid polypeptide reads, in one-letter code: Anaphase-promoting complex subunit 11 (84 aa).

Residues C23, C26, C34, C37, C44, C51, H53, H56, H58, C59, C73, and C76 each contribute to the Zn(2+) site. Residues 34–77 (CPDCKVPGDDCPLVWGQCSHCFHMHCILKWLNAQQVQQHCPMCR) form an RING-type zinc finger.

Belongs to the RING-box family. The mammalian APC/C is composed at least of 14 distinct subunits ANAPC1, ANAPC2, CDC27/APC3, ANAPC4, ANAPC5, CDC16/APC6, ANAPC7, CDC23/APC8, ANAPC10, ANAPC11, CDC26/APC12, ANAPC13, ANAPC15 and ANAPC16 that assemble into a complex of at least 19 chains with a combined molecular mass of around 1.2 MDa; APC/C interacts with FZR1 and FBXO5. Interacts with the cullin domain of ANAPC2. Interacts with UBE2D2. Auto-ubiquitinated.

Its subcellular location is the cytoplasm. It localises to the nucleus. The protein operates within protein modification; protein ubiquitination. Together with the cullin protein ANAPC2, constitutes the catalytic component of the anaphase promoting complex/cyclosome (APC/C), a cell cycle-regulated E3 ubiquitin ligase that controls progression through mitosis and the G1 phase of the cell cycle. The APC/C complex acts by mediating ubiquitination and subsequent degradation of target proteins: it mainly mediates the formation of 'Lys-11'-linked polyubiquitin chains and, to a lower extent, the formation of 'Lys-48'- and 'Lys-63'-linked polyubiquitin chains. The APC/C complex catalyzes assembly of branched 'Lys-11'-/'Lys-48'-linked branched ubiquitin chains on target proteins. May recruit the E2 ubiquitin-conjugating enzymes to the complex. The sequence is that of Anaphase-promoting complex subunit 11 (ANAPC11) from Bos taurus (Bovine).